Here is a 236-residue protein sequence, read N- to C-terminus: Thioredoxin-like 2-2, chloroplastic (236 aa).

The transit peptide at 1–82 directs the protein to the chloroplast; it reads MAGVVRLTTT…LRRPKSQVVR (82 aa). Positions 83 to 220 constitute a Thioredoxin domain; it reads VKVDENVAET…QLELGITLQT (138 aa). Catalysis depends on nucleophile residues C135 and C138. A disulfide bridge links C135 with C138.

The protein belongs to the thioredoxin family.

It localises to the plastid. It is found in the chloroplast. Functionally, thiol-disulfide oxidoreductase that may participate in various redox reactions. Possesses insulin disulfide bonds reducing activity. The sequence is that of Thioredoxin-like 2-2, chloroplastic from Arabidopsis thaliana (Mouse-ear cress).